A 36-amino-acid chain; its full sequence is Photosystem I reaction center subunit VIII (36 aa).

Residues 9–29 traverse the membrane as a helical segment; sequence IFVPLVGLVFPAVAMASLFLY.

This sequence belongs to the PsaI family.

Its subcellular location is the plastid. It is found in the chloroplast thylakoid membrane. Its function is as follows. May help in the organization of the PsaL subunit. The sequence is that of Photosystem I reaction center subunit VIII from Ostreococcus tauri.